Consider the following 175-residue polypeptide: Coagulogen (175 aa).

8 cysteine pairs are disulfide-bonded: Cys-8/Cys-167, Cys-10/Cys-95, Cys-60/Cys-161, Cys-65/Cys-121, Cys-75/Cys-168, Cys-88/Cys-140, Cys-127/Cys-170, and Cys-134/Cys-172.

Belongs to the coagulin family. Coagulogen is cleaved after Arg-18 and Arg-46 by a clotting enzyme contained in the hemocyte and activated by a bacterial endotoxin (lipopolysaccharide). This cleavage releases the peptide C and leaves 2 chains of coagulin, A and B, linked by two disulfide bonds. Coagulin molecules interlink to form a gel. In terms of tissue distribution, hemolymph.

It localises to the secreted. Its function is as follows. Coagulogen is a gel-forming protein of hemolymph; it hinders the spread of invaders by immobilizing them. In Tachypleus gigas (Southeast Asian horseshoe crab), this protein is Coagulogen.